Consider the following 556-residue polypeptide: Formate--tetrahydrofolate ligase (556 aa).

65 to 72 (TPAGEGKS) serves as a coordination point for ATP.

Belongs to the formate--tetrahydrofolate ligase family.

It carries out the reaction (6S)-5,6,7,8-tetrahydrofolate + formate + ATP = (6R)-10-formyltetrahydrofolate + ADP + phosphate. The protein operates within one-carbon metabolism; tetrahydrofolate interconversion. The protein is Formate--tetrahydrofolate ligase of Streptococcus pneumoniae (strain JJA).